The sequence spans 225 residues: Large ribosomal subunit protein uL1 (225 aa).

This sequence belongs to the universal ribosomal protein uL1 family. Part of the 50S ribosomal subunit.

In terms of biological role, binds directly to 23S rRNA. The L1 stalk is quite mobile in the ribosome, and is involved in E site tRNA release. Functionally, protein L1 is also a translational repressor protein, it controls the translation of the L11 operon by binding to its mRNA. The chain is Large ribosomal subunit protein uL1 from Rhodopirellula baltica (strain DSM 10527 / NCIMB 13988 / SH1).